A 377-amino-acid chain; its full sequence is Prolargin (377 aa).

A signal peptide spans 1 to 21 (MRASFFWFLPLLLILASVAQG). The tract at residues 22-61 (QPRPKPGIRRKPKPRPTPSFPQPHEPAEPTDLPPPLPPGP) is disordered. 2 stretches are compositionally biased toward pro residues: residues 36 to 45 (RPTPSFPQPH) and 52 to 61 (DLPPPLPPGP). 12 LRR repeats span residues 90–109 (RKVPIIPPRIHYLYLQNNFI), 110–133 (TELPVESFKNATGLRWINLDNNRI), 134–157 (RKVDQRVLEKLPGLAFLYMDKNQL), 158–178 (EEVPSALPRNLEQLRLSQNLI), 179–202 (SRIPPGVFSKLENLLLLDLQHNRL), 203–228 (SDGVFKADTFQGLKNLMQLNLAHNIL), 229–249 (RRMPPKVPPAIHQLYLDSNKI), 250–273 (ETIPSGYFKDFPNLAFIRMNYNKL), 274–298 (SDRGLPKNSFNISNLLVLHLSHNKI), 299–318 (SNVPAISNKLEHLYLNNNSI), 319–357 (EKINGTQICPSNLVAFHDFSSDLENVPHLRYLRLDGNFL), and 358–377 (KPPIPLDLMMCFRLLQSVVI). N-linked (GlcNAc...) asparagine glycosylation occurs at asparagine 119. N-linked (GlcNAc...) asparagine glycosylation is found at asparagine 284, asparagine 315, and asparagine 322. Cysteine 327 and cysteine 368 are disulfide-bonded.

It belongs to the small leucine-rich proteoglycan (SLRP) family. SLRP class II subfamily. As to quaternary structure, binds the basement membrane heparan sulfate proteoglycan perlecan and triple helical collagens type I and type II. Glycosylated; contains heparan sulfate.

The protein localises to the secreted. Its subcellular location is the extracellular space. The protein resides in the extracellular matrix. In terms of biological role, may anchor basement membranes to the underlying connective tissue. The protein is Prolargin (Prelp) of Rattus norvegicus (Rat).